We begin with the raw amino-acid sequence, 324 residues long: NAD kinase (324 aa).

The Proton acceptor role is filled by D89. Residues 89-90 (DG), R94, 163-164 (NE), D193, and 204-209 (TAYAFS) each bind NAD(+).

Belongs to the NAD kinase family. Requires a divalent metal cation as cofactor.

The protein resides in the cytoplasm. It catalyses the reaction NAD(+) + ATP = ADP + NADP(+) + H(+). Involved in the regulation of the intracellular balance of NAD and NADP, and is a key enzyme in the biosynthesis of NADP. Catalyzes specifically the phosphorylation on 2'-hydroxyl of the adenosine moiety of NAD to yield NADP. The polypeptide is NAD kinase (Nocardia farcinica (strain IFM 10152)).